Reading from the N-terminus, the 268-residue chain is Imidazole glycerol phosphate synthase subunit HisF (268 aa).

Residues aspartate 12 and aspartate 131 contribute to the active site.

It belongs to the HisA/HisF family. As to quaternary structure, heterodimer of HisH and HisF.

The protein localises to the cytoplasm. It catalyses the reaction 5-[(5-phospho-1-deoxy-D-ribulos-1-ylimino)methylamino]-1-(5-phospho-beta-D-ribosyl)imidazole-4-carboxamide + L-glutamine = D-erythro-1-(imidazol-4-yl)glycerol 3-phosphate + 5-amino-1-(5-phospho-beta-D-ribosyl)imidazole-4-carboxamide + L-glutamate + H(+). The protein operates within amino-acid biosynthesis; L-histidine biosynthesis; L-histidine from 5-phospho-alpha-D-ribose 1-diphosphate: step 5/9. Its function is as follows. IGPS catalyzes the conversion of PRFAR and glutamine to IGP, AICAR and glutamate. The HisF subunit catalyzes the cyclization activity that produces IGP and AICAR from PRFAR using the ammonia provided by the HisH subunit. This chain is Imidazole glycerol phosphate synthase subunit HisF, found in Methanosphaerula palustris (strain ATCC BAA-1556 / DSM 19958 / E1-9c).